The chain runs to 363 residues: 3-dehydroquinate synthase (363 aa).

NAD(+)-binding positions include 72–77 (SGEQSK), 106–110 (GVIGD), 130–131 (TT), Lys142, and Lys151. Zn(2+) contacts are provided by Glu184, His246, and His263.

Belongs to the sugar phosphate cyclases superfamily. Dehydroquinate synthase family. It depends on Co(2+) as a cofactor. The cofactor is Zn(2+). NAD(+) serves as cofactor.

Its subcellular location is the cytoplasm. It catalyses the reaction 7-phospho-2-dehydro-3-deoxy-D-arabino-heptonate = 3-dehydroquinate + phosphate. It participates in metabolic intermediate biosynthesis; chorismate biosynthesis; chorismate from D-erythrose 4-phosphate and phosphoenolpyruvate: step 2/7. In terms of biological role, catalyzes the conversion of 3-deoxy-D-arabino-heptulosonate 7-phosphate (DAHP) to dehydroquinate (DHQ). The chain is 3-dehydroquinate synthase from Bacillus pumilus (strain SAFR-032).